The following is a 330-amino-acid chain: 7,8-didemethyl-8-hydroxy-5-deazariboflavin synthase (330 aa).

In terms of domain architecture, Radical SAM core spans 13 to 253 (VTFSKNAFIP…EDISIQVPPN (241 aa)). Cys-27, Cys-31, and Cys-34 together coordinate [4Fe-4S] cluster.

This sequence belongs to the radical SAM superfamily. CofG family. As to quaternary structure, consists of two subunits, CofG and CofH. Requires [4Fe-4S] cluster as cofactor.

The enzyme catalyses 5-amino-5-(4-hydroxybenzyl)-6-(D-ribitylimino)-5,6-dihydrouracil + S-adenosyl-L-methionine = 7,8-didemethyl-8-hydroxy-5-deazariboflavin + 5'-deoxyadenosine + L-methionine + NH4(+) + H(+). Its pathway is cofactor biosynthesis; coenzyme F0 biosynthesis. Catalyzes the radical-mediated synthesis of 7,8-didemethyl-8-hydroxy-5-deazariboflavin from 5-amino-5-(4-hydroxybenzyl)-6-(D-ribitylimino)-5,6-dihydrouracil. The polypeptide is 7,8-didemethyl-8-hydroxy-5-deazariboflavin synthase (Methanococcus maripaludis (strain DSM 14266 / JCM 13030 / NBRC 101832 / S2 / LL)).